Here is a 116-residue protein sequence, read N- to C-terminus: MSFCSFFGGEVFQNHFEPGVYVCAKCSYELFSSHSKYAHSSPWPAFTETIHPDSVTKCPEKNRPEALKVSCGKCGNGLGHEFLNDGPKRGQSRFUIFSSSLKFVPKGKEAAASQGH.

The MsrB domain occupies 1–106; sequence MSFCSFFGGE…FSSSLKFVPK (106 aa). The Zn(2+) site is built by Cys-23, Cys-26, Cys-71, and Cys-74. The active-site Nucleophile is Sec-95. A non-standard amino acid (selenocysteine) is located at residue Sec-95.

It belongs to the MsrB Met sulfoxide reductase family. Requires Zn(2+) as cofactor. In terms of processing, truncated MSRB1/SEPX1 proteins produced by failed UGA/Sec decoding are ubiquitinated by the CRL2(FEM1C) E3 ubiquitin-protein ligase complex.

The protein localises to the cytoplasm. The protein resides in the nucleus. It is found in the cytoskeleton. The catalysed reaction is L-methionyl-[protein] + [thioredoxin]-disulfide + H2O = L-methionyl-(R)-S-oxide-[protein] + [thioredoxin]-dithiol. It catalyses the reaction [thioredoxin]-disulfide + L-methionine + H2O = L-methionine (R)-S-oxide + [thioredoxin]-dithiol. In terms of biological role, methionine-sulfoxide reductase that specifically reduces methionine (R)-sulfoxide back to methionine. While in many cases, methionine oxidation is the result of random oxidation following oxidative stress, methionine oxidation is also a post-translational modification that takes place on specific residue. Acts as a regulator of actin assembly by reducing methionine (R)-sulfoxide mediated by MICALs (MICAL1, MICAL2 or MICAL3) on actin, thereby promoting filament repolymerization. Plays a role in innate immunity by reducing oxidized actin, leading to actin repolymerization in macrophages. The protein is Methionine-R-sulfoxide reductase B1 (Msrb1) of Mus musculus (Mouse).